Consider the following 371-residue polypeptide: Peptide chain release factor 2 (371 aa).

N5-methylglutamine is present on glutamine 253.

The protein belongs to the prokaryotic/mitochondrial release factor family. Post-translationally, methylated by PrmC. Methylation increases the termination efficiency of RF2.

Its subcellular location is the cytoplasm. Functionally, peptide chain release factor 2 directs the termination of translation in response to the peptide chain termination codons UGA and UAA. The polypeptide is Peptide chain release factor 2 (Mycobacterium ulcerans (strain Agy99)).